The chain runs to 560 residues: Formate--tetrahydrofolate ligase (560 aa).

69-76 provides a ligand contact to ATP; sequence TPAGEGKS.

This sequence belongs to the formate--tetrahydrofolate ligase family.

It catalyses the reaction (6S)-5,6,7,8-tetrahydrofolate + formate + ATP = (6R)-10-formyltetrahydrofolate + ADP + phosphate. It participates in one-carbon metabolism; tetrahydrofolate interconversion. In Listeria monocytogenes serotype 4b (strain CLIP80459), this protein is Formate--tetrahydrofolate ligase.